A 301-amino-acid polypeptide reads, in one-letter code: Ribonuclease HIII (301 aa).

In terms of domain architecture, RNase H type-2 spans 84 to 301 (ASAIGSDEVG…TEKAARIAKK (218 aa)). Residues D90, E91, and D195 each contribute to the a divalent metal cation site.

This sequence belongs to the RNase HII family. RnhC subfamily. Mn(2+) serves as cofactor. It depends on Mg(2+) as a cofactor.

It localises to the cytoplasm. The catalysed reaction is Endonucleolytic cleavage to 5'-phosphomonoester.. In terms of biological role, endonuclease that specifically degrades the RNA of RNA-DNA hybrids. In Geobacillus sp. (strain WCH70), this protein is Ribonuclease HIII.